A 298-amino-acid polypeptide reads, in one-letter code: Ethanolamine ammonia-lyase small subunit (298 aa).

Residues V210, E231, and C261 each contribute to the adenosylcob(III)alamin site.

Belongs to the EutC family. In terms of assembly, the basic unit is a heterodimer which dimerizes to form tetramers. The heterotetramers trimerize; 6 large subunits form a core ring with 6 small subunits projecting outwards. Requires adenosylcob(III)alamin as cofactor.

It is found in the bacterial microcompartment. The enzyme catalyses ethanolamine = acetaldehyde + NH4(+). It functions in the pathway amine and polyamine degradation; ethanolamine degradation. Its function is as follows. Catalyzes the deamination of various vicinal amino-alcohols to oxo compounds. Allows this organism to utilize ethanolamine as the sole source of nitrogen and carbon in the presence of external vitamin B12. This chain is Ethanolamine ammonia-lyase small subunit, found in Salmonella typhi.